Here is a 173-residue protein sequence, read N- to C-terminus: Putative C-type lectin protein FPV198 (173 aa).

In terms of domain architecture, C-type lectin spans 50-169 (GMSGWVQINN…CNKKHTGICF (120 aa)).

This Vertebrata (FPV) protein is Putative C-type lectin protein FPV198.